A 1435-amino-acid polypeptide reads, in one-letter code: DNA polymerase III PolC-type (1435 aa).

In terms of domain architecture, Exonuclease spans 420 to 576 (YVVFDVETTG…YDTEATGYLL (157 aa)).

This sequence belongs to the DNA polymerase type-C family. PolC subfamily.

Its subcellular location is the cytoplasm. It catalyses the reaction DNA(n) + a 2'-deoxyribonucleoside 5'-triphosphate = DNA(n+1) + diphosphate. Its function is as follows. Required for replicative DNA synthesis. This DNA polymerase also exhibits 3' to 5' exonuclease activity. The sequence is that of DNA polymerase III PolC-type from Bacillus cereus (strain ATCC 14579 / DSM 31 / CCUG 7414 / JCM 2152 / NBRC 15305 / NCIMB 9373 / NCTC 2599 / NRRL B-3711).